A 193-amino-acid chain; its full sequence is Epididymal-specific lipocalin-12 (193 aa).

Positions 1–19 (MGPWWALWLILTLPQILES) are cleaved as a signal peptide. Cysteines 88 and 193 form a disulfide. Residues N143 and N172 are each glycosylated (N-linked (GlcNAc...) asparagine).

This sequence belongs to the calycin superfamily. Lipocalin family. Monomer. As to expression, expressed in epididymis.

Its subcellular location is the secreted. Binds all-trans retinoic acid and may act as a retinoid carrier protein within the epididymis. May play a role in male fertility. The chain is Epididymal-specific lipocalin-12 (Lcn12) from Mus musculus (Mouse).